Reading from the N-terminus, the 130-residue chain is UPF0225 protein DR_0483 (130 aa).

This sequence belongs to the UPF0225 family.

This Deinococcus radiodurans (strain ATCC 13939 / DSM 20539 / JCM 16871 / CCUG 27074 / LMG 4051 / NBRC 15346 / NCIMB 9279 / VKM B-1422 / R1) protein is UPF0225 protein DR_0483.